Consider the following 262-residue polypeptide: Sulfur carrier protein FdhD (262 aa).

The active-site Cysteine persulfide intermediate is cysteine 105. 246–251 lines the Mo-bis(molybdopterin guanine dinucleotide) pocket; that stretch reads FVRKNR.

It belongs to the FdhD family.

Its subcellular location is the cytoplasm. Required for formate dehydrogenase (FDH) activity. Acts as a sulfur carrier protein that transfers sulfur from IscS to the molybdenum cofactor prior to its insertion into FDH. This is Sulfur carrier protein FdhD from Picrophilus torridus (strain ATCC 700027 / DSM 9790 / JCM 10055 / NBRC 100828 / KAW 2/3).